The chain runs to 379 residues: Cobalt-precorrin-5B C(1)-methyltransferase (379 aa).

Belongs to the CbiD family.

The enzyme catalyses Co-precorrin-5B + S-adenosyl-L-methionine = Co-precorrin-6A + S-adenosyl-L-homocysteine. It functions in the pathway cofactor biosynthesis; adenosylcobalamin biosynthesis; cob(II)yrinate a,c-diamide from sirohydrochlorin (anaerobic route): step 6/10. Functionally, catalyzes the methylation of C-1 in cobalt-precorrin-5B to form cobalt-precorrin-6A. The chain is Cobalt-precorrin-5B C(1)-methyltransferase from Salmonella typhi.